The primary structure comprises 254 residues: 4-hydroxy-tetrahydrodipicolinate reductase (254 aa).

NAD(+) is bound by residues 8–13 (GCSGKM), D35, 86–88 (CST), and 110–113 (SANM). The active-site Proton donor/acceptor is H143. A (S)-2,3,4,5-tetrahydrodipicolinate-binding site is contributed by H144. The active-site Proton donor is K147. 153-154 (GT) lines the (S)-2,3,4,5-tetrahydrodipicolinate pocket.

It belongs to the DapB family.

The protein resides in the cytoplasm. It carries out the reaction (S)-2,3,4,5-tetrahydrodipicolinate + NAD(+) + H2O = (2S,4S)-4-hydroxy-2,3,4,5-tetrahydrodipicolinate + NADH + H(+). The catalysed reaction is (S)-2,3,4,5-tetrahydrodipicolinate + NADP(+) + H2O = (2S,4S)-4-hydroxy-2,3,4,5-tetrahydrodipicolinate + NADPH + H(+). It functions in the pathway amino-acid biosynthesis; L-lysine biosynthesis via DAP pathway; (S)-tetrahydrodipicolinate from L-aspartate: step 4/4. Functionally, catalyzes the conversion of 4-hydroxy-tetrahydrodipicolinate (HTPA) to tetrahydrodipicolinate. The protein is 4-hydroxy-tetrahydrodipicolinate reductase of Clostridium perfringens (strain 13 / Type A).